We begin with the raw amino-acid sequence, 93 residues long: Insertion element ISR1 uncharacterized 11 kDa protein A1 (93 aa).

Disordered regions lie at residues arginine 14–arginine 33 and arginine 68–arginine 93.

This Rhizobium sp protein is Insertion element ISR1 uncharacterized 11 kDa protein A1.